Consider the following 488-residue polypeptide: Monothiol glutaredoxin-S17 (488 aa).

Residues 2–107 form the Thioredoxin domain; that stretch reads SGTVKDIVSK…LANKVGKVAG (106 aa). Glutaredoxin domains are found at residues 154-256, 284-386, and 391-488; these read KSRL…GITT, RARL…GITG, and EDRL…TLSE. Lysine 408 is a glutathione binding site. Cysteine 416 contacts [2Fe-2S] cluster. Glutathione contacts are provided by residues arginine 445, phenylalanine 457, and 470–471; that span reads CD.

The protein belongs to the glutaredoxin family. CGFS subfamily. In terms of assembly, [2Fe-2S]-bridged holo-homodimer. Interacts in vitro with SUFE1, BOLA1, BOLA2 and BOLA4. Interacts in vivo only with BOLA2. Interacts with RGLG3 and RGLG4. In terms of processing, ubiquitinated at Lys-154. Polyubiquitinated by RGLG3 and RGLG4. Polyubiquitination of GRXS17 leads to its degradation by the proteasome.

It localises to the cytoplasm. Functionally, may only reduce GSH-thiol disulfides, but not protein disulfides. Participates probably to the maturation of iron-sulfur proteins and to the regulation of the redox state of the BOLA proteins. The GRXS17-BOLA2 heterodimer binds a labile, oxygen sensitive iron-sulfur cluster. The protein is Monothiol glutaredoxin-S17 of Arabidopsis thaliana (Mouse-ear cress).